We begin with the raw amino-acid sequence, 380 residues long: tRNA-specific 2-thiouridylase MnmA (380 aa).

Residues 6 to 13 (ALSGGVDS) and M32 each bind ATP. C101 (nucleophile) is an active-site residue. Cysteines 101 and 199 form a disulfide. G125 serves as a coordination point for ATP. Positions 148-150 (KDQ) are interaction with tRNA. C199 serves as the catalytic Cysteine persulfide intermediate.

Belongs to the MnmA/TRMU family.

Its subcellular location is the cytoplasm. It catalyses the reaction S-sulfanyl-L-cysteinyl-[protein] + uridine(34) in tRNA + AH2 + ATP = 2-thiouridine(34) in tRNA + L-cysteinyl-[protein] + A + AMP + diphosphate + H(+). Its function is as follows. Catalyzes the 2-thiolation of uridine at the wobble position (U34) of tRNA, leading to the formation of s(2)U34. In Beutenbergia cavernae (strain ATCC BAA-8 / DSM 12333 / CCUG 43141 / JCM 11478 / NBRC 16432 / NCIMB 13614 / HKI 0122), this protein is tRNA-specific 2-thiouridylase MnmA.